A 559-amino-acid polypeptide reads, in one-letter code: MEYDYIIIGAGSAGNVLATRLTEESDVSVLLLEAGGPDYRLDFRTQMPAALAFPLQGKRYNWAYETDPEPHMNNRRMECGRGKGLGGSSLINGMCYIRGNAMDFDNWATMPGLEDWSYLDCLPYFRKAETRDVGSNDYHGATGPVSVATPKMGNNELFHAMVEAGVQAGYPRTDDLNGYQQEGFGPMDRTVTPKGRRASTARGYLDQAKGRKNLTIVTHALTDKILFEGKRAVGVAYFKGESPQTVQARREVLLCAGAIASPQILQRSGVGPKDLLQGLDIPVVHDLPGVGENLQDHLEMYLQYACKEPVSLYPALQWFNQPKIGAEWLFSGTGIGASNQFEAGGFIRSRDEFAWPNIQYHFLPVAINYNGSNAVKEHGFQAHVGSMRSLSRGRVQVRSKDAREHPSILFNYMSTEQDWQEFRDAIRITREIMAQPALDKYRGREISPGLEVQTDEELDEFIRTHAETAFHPSCSCKMGEDEMAVVDGQGRVHGMEGLRVVDASIMPQIITGNLNATTIMIAEKIADRIRRRQPLPRSRARYYVSGNTPVRKAPLKPAS.

Position 4–33 (4–33) interacts with FAD; that stretch reads DYIIIGAGSAGNVLATRLTEESDVSVLLLE. Residues 182–201 form a disordered region; sequence EGFGPMDRTVTPKGRRASTA. Residue histidine 471 is the Proton acceptor of the active site.

This sequence belongs to the GMC oxidoreductase family. Requires FAD as cofactor.

The enzyme catalyses choline + A = betaine aldehyde + AH2. It carries out the reaction betaine aldehyde + NAD(+) + H2O = glycine betaine + NADH + 2 H(+). Its pathway is amine and polyamine biosynthesis; betaine biosynthesis via choline pathway; betaine aldehyde from choline (cytochrome c reductase route): step 1/1. Functionally, involved in the biosynthesis of the osmoprotectant glycine betaine. Catalyzes the oxidation of choline to betaine aldehyde and betaine aldehyde to glycine betaine at the same rate. The chain is Oxygen-dependent choline dehydrogenase from Pectobacterium carotovorum subsp. carotovorum (strain PC1).